The following is a 71-amino-acid chain: Exodeoxyribonuclease 7 small subunit (71 aa).

The protein belongs to the XseB family. Heterooligomer composed of large and small subunits.

The protein localises to the cytoplasm. The catalysed reaction is Exonucleolytic cleavage in either 5'- to 3'- or 3'- to 5'-direction to yield nucleoside 5'-phosphates.. Its function is as follows. Bidirectionally degrades single-stranded DNA into large acid-insoluble oligonucleotides, which are then degraded further into small acid-soluble oligonucleotides. This chain is Exodeoxyribonuclease 7 small subunit, found in Streptococcus equi subsp. zooepidemicus (strain H70).